The primary structure comprises 164 residues: UPF0114 protein KPK_0696 (164 aa).

4 consecutive transmembrane segments (helical) span residues 15–35 (LLAP…IKFF), 53–73 (LILT…LVMV), 109–126 (VAAS…RVFM), and 136–156 (LMWY…MGYL).

This sequence belongs to the UPF0114 family.

It is found in the cell membrane. In Klebsiella pneumoniae (strain 342), this protein is UPF0114 protein KPK_0696.